The sequence spans 525 residues: GMP synthase [glutamine-hydrolyzing] (525 aa).

The Glutamine amidotransferase type-1 domain occupies 8–207; it reads KILILDFGSQ…ALDICECEAN (200 aa). Cysteine 85 serves as the catalytic Nucleophile. Active-site residues include histidine 181 and glutamate 183. Positions 208-400 constitute a GMPS ATP-PPase domain; sequence WKPTSIIEDA…LGLPYDMLYR (193 aa). Position 235–241 (235–241) interacts with ATP; that stretch reads SGGVDSS.

In terms of assembly, homodimer.

It catalyses the reaction XMP + L-glutamine + ATP + H2O = GMP + L-glutamate + AMP + diphosphate + 2 H(+). The protein operates within purine metabolism; GMP biosynthesis; GMP from XMP (L-Gln route): step 1/1. Functionally, catalyzes the synthesis of GMP from XMP. The protein is GMP synthase [glutamine-hydrolyzing] of Shewanella sediminis (strain HAW-EB3).